Reading from the N-terminus, the 1960-residue chain is Zinc finger protein 638 (1960 aa).

Residues 1–137 form a disordered region; sequence MSRPRFNPRG…SPKVQSRYTK (137 aa). Pro residues predominate over residues 19–31; that stretch reads APNPPGMRPPGPF. An asymmetric dimethylarginine mark is found at Arg-47, Arg-49, and Arg-54. Residues 60-75 show a composition bias toward polar residues; the sequence is SYQNMGPQRMNVQVTQ. Residues 76-89 show a composition bias toward basic and acidic residues; sequence HRTDPRLTKEKLDF. Positions 117-137 are enriched in polar residues; the sequence is KQSSVTQVTEQSPKVQSRYTK. Phosphoserine is present on residues Ser-128 and Ser-288. Lys-291 is covalently cross-linked (Glycyl lysine isopeptide (Lys-Gly) (interchain with G-Cter in SUMO2)). Ser-298, Ser-367, Ser-381, and Ser-418 each carry phosphoserine. Residues 352 to 373 are disordered; sequence KSVISSADAHGGPTESKKDYQS. 3 disordered regions span residues 463–673, 749–804, and 827–899; these read NPEI…QSLS, PGKK…STVK, and KASI…KESE. Residues 468-483 show a composition bias toward basic and acidic residues; it reads PSRRNESNRKENETPR. An involved in localization to nuclear speckles region spans residues 470–573; that stretch reads RRNESNRKEN…ERTSRKSVRS (104 aa). The span at 484–556 shows a compositional bias: basic residues; sequence RRSHSPSPRH…SRNLLRRSPK (73 aa). Phosphoserine is present on Ser-554. 2 stretches are compositionally biased toward basic and acidic residues: residues 565–583 and 591–602; these read RTSRKSVRSDRKKALEDGG and EVTKQKHTETVD. A phosphoserine mark is found at Ser-606 and Ser-615. Over residues 618–628 the composition is skewed to low complexity; that stretch reads KPSAKSLSSVK. The residue at position 637 (Ser-637) is a Phosphoserine. One can recognise an RRM 1 domain in the interval 676 to 751; that stretch reads SILLVSELPE…KSVKVCVPGK (76 aa). Positions 755-782 are enriched in basic and acidic residues; it reads QNKEMKKKPSDIKKSSASALKKETDASK. Lys-775 is covalently cross-linked (Glycyl lysine isopeptide (Lys-Gly) (interchain with G-Cter in SUMO2)). The segment covering 783-802 has biased composition (low complexity); that stretch reads TMETVSSSSSAKSGQIKSST. 3 stretches are compositionally biased toward basic and acidic residues: residues 838 to 854, 867 to 879, and 888 to 899; these read KSLEAKKSGNIKNKDSN, ASSEDKATGKSAE, and ATEKEPVNKESE. An RRM 2 domain is found at 902-976; sequence SVVFISNLPN…NQLSISMAPE (75 aa). The span at 1082 to 1092 shows a compositional bias: basic and acidic residues; sequence SEVQRKNDLEL. Disordered regions lie at residues 1082–1151, 1396–1420, 1442–1462, 1484–1527, and 1550–1583; these read SEVQ…EEPK, TVVSSPKAKSTPSKTESHSTFPKPV, TRSGLAESNSKSKPTQIGVNR, TKQS…KSKE, and PSQAKQNPLKGKRKEALKISPSPELNLKKKKGKT. Phosphoserine is present on Ser-1099. The segment covering 1140 to 1151 has biased composition (basic and acidic residues); it reads VHQEELGKEEPK. Over residues 1399-1409 the composition is skewed to low complexity; sequence SSPKAKSTPSK. Ser-1400 bears the Phosphoserine mark. Positions 1442 to 1459 are enriched in polar residues; it reads TRSGLAESNSKSKPTQIG. Basic and acidic residues-rich tracts occupy residues 1484–1503 and 1518–1527; these read TKQSQETETKPPIMKRDDSN and TTDRSSKSKE. Ser-1635 and Ser-1661 each carry phosphoserine. 2 disordered regions span residues 1763–1898 and 1930–1960; these read EVGD…SDVP and KSTRHKQNTEKFMAKQRKEKEQNETEERSSR. A compositionally biased stretch (basic and acidic residues) spans 1772–1790; that stretch reads NDSKVELARGKIEHHTDKK. Residue Lys-1804 forms a Glycyl lysine isopeptide (Lys-Gly) (interchain with G-Cter in SUMO2) linkage. Polar residues predominate over residues 1806 to 1818; the sequence is DSFSQVGPGSETV. Over residues 1819–1831 the composition is skewed to basic and acidic residues; the sequence is TQKDLKTMPERHL. Ser-1864 is subject to Phosphoserine. Residues 1870–1885 are compositionally biased toward basic and acidic residues; it reads AELKDSEPDEKRRKTQ. The Matrin-type zinc-finger motif lies at 1876–1906; the sequence is EPDEKRRKTQDSSVGKSMTSDVPGDLDFLVP. A compositionally biased stretch (polar residues) spans 1886–1895; it reads DSSVGKSMTS. Over residues 1936–1960 the composition is skewed to basic and acidic residues; that stretch reads QNTEKFMAKQRKEKEQNETEERSSR.

Interacts with FHL2. Interacts with CEBPA, CEBPD and CEBPG. Interacts with MPHOSPH8 and TASOR components of the HUSH complex; leading to recruitment of the HUSH complex. Interacts with SETDB1. Interacts with HDAC1. Interacts with HDAC4.

It is found in the nucleus speckle. Functionally, transcription factor that binds to cytidine clusters in double-stranded DNA. Plays a key role in the silencing of unintegrated retroviral DNA: some part of the retroviral DNA formed immediately after infection remains unintegrated in the host genome and is transcriptionally repressed. Mediates transcriptional repression of unintegrated viral DNA by specifically binding to the cytidine clusters of retroviral DNA and mediating the recruitment of chromatin silencers, such as the HUSH complex, SETDB1 and the histone deacetylases HDAC1 and HDAC4. Acts as an early regulator of adipogenesis by acting as a transcription cofactor of CEBPs (CEBPA, CEBPD and/or CEBPG), controlling the expression of PPARG and probably of other proadipogenic genes, such as SREBF1. May also regulate alternative splicing of target genes during adipogenesis. This is Zinc finger protein 638 from Mus musculus (Mouse).